The primary structure comprises 214 residues: External core antigen (214 aa).

A signal peptide spans 1 to 19; that stretch reads MQLFHLCLIISCTCPTVQA. Positions 25-27 are HBEAG; the sequence is GWL. The tract at residues 165–214 is disordered; sequence NAPILSTLPETTVVRRRDRGRSPRRRTPSPRRRRSQSPRRRRSQSRESQC. The span at 178–207 shows a compositional bias: basic residues; that stretch reads VRRRDRGRSPRRRTPSPRRRRSQSPRRRRS. Residues 186–192 form a 1; half-length repeat; sequence SPRRRTP. The tract at residues 186–208 is 3 X 8 AA repeats of S-P-R-R-R-R-S-Q; the sequence is SPRRRTPSPRRRRSQSPRRRRSQ. Residues 186–214 constitute a propeptide that is removed on maturation; that stretch reads SPRRRTPSPRRRRSQSPRRRRSQSRESQC. 2 consecutive repeat copies span residues 193-200 and 201-208.

The protein belongs to the orthohepadnavirus precore antigen family. Homodimerizes. In terms of processing, phosphorylated. Post-translationally, cleaved by host furin.

The protein resides in the secreted. Its subcellular location is the host nucleus. Functionally, may regulate immune response to the intracellular capsid in acting as a T-cell tolerogen, by having an immunoregulatory effect which prevents destruction of infected cells by cytotoxic T-cells. This immune regulation may predispose to chronicity during perinatal infections and prevent severe liver injury during adult infections. The chain is External core antigen from Hepatitis B virus genotype A2 (isolate Japan/11D11HCCW/1998) (HBV-A).